The sequence spans 596 residues: Chaperone protein DnaK (596 aa).

T174 bears the Phosphothreonine; by autocatalysis mark. The disordered stretch occupies residues 576-596; the sequence is ANATKDQSSKDQEEVATVVEE.

This sequence belongs to the heat shock protein 70 family.

Functionally, acts as a chaperone. The sequence is that of Chaperone protein DnaK from Mycoplasmopsis synoviae (strain 53) (Mycoplasma synoviae).